We begin with the raw amino-acid sequence, 150 residues long: MSIPFPSAPADKEALENAGLFSPKFDAHGLVTAVVTDARDGELLMVAHMNAEALSLTLETGIAHYYSRSRDKIWKKGETSGNLQTVKEFRTDCDQDAVWLKVSVAGHDATCHTGRRSCFYRTVELSNGDAVTKITDDTRHFDPATTYSNT.

D92 contributes to the Mg(2+) binding site. C93 lines the Zn(2+) pocket. Positions 94 and 96 each coordinate Mg(2+). 2 residues coordinate Zn(2+): C111 and C118.

The protein belongs to the PRA-CH family. As to quaternary structure, homodimer. Mg(2+) is required as a cofactor. It depends on Zn(2+) as a cofactor.

The protein resides in the cytoplasm. The catalysed reaction is 1-(5-phospho-beta-D-ribosyl)-5'-AMP + H2O = 1-(5-phospho-beta-D-ribosyl)-5-[(5-phospho-beta-D-ribosylamino)methylideneamino]imidazole-4-carboxamide. Its pathway is amino-acid biosynthesis; L-histidine biosynthesis; L-histidine from 5-phospho-alpha-D-ribose 1-diphosphate: step 3/9. In terms of biological role, catalyzes the hydrolysis of the adenine ring of phosphoribosyl-AMP. The sequence is that of Phosphoribosyl-AMP cyclohydrolase from Agrobacterium fabrum (strain C58 / ATCC 33970) (Agrobacterium tumefaciens (strain C58)).